The sequence spans 396 residues: DNA polymerase IV (396 aa).

In terms of domain architecture, UmuC spans Ile2–Gly182. Residues Asp6 and Asp100 each contribute to the Mg(2+) site. Glu101 is a catalytic residue.

It belongs to the DNA polymerase type-Y family. In terms of assembly, monomer. Mg(2+) serves as cofactor.

It localises to the cytoplasm. It catalyses the reaction DNA(n) + a 2'-deoxyribonucleoside 5'-triphosphate = DNA(n+1) + diphosphate. Functionally, poorly processive, error-prone DNA polymerase involved in untargeted mutagenesis. Copies undamaged DNA at stalled replication forks, which arise in vivo from mismatched or misaligned primer ends. These misaligned primers can be extended by PolIV. Exhibits no 3'-5' exonuclease (proofreading) activity. May be involved in translesional synthesis, in conjunction with the beta clamp from PolIII. This is DNA polymerase IV from Rhodopirellula baltica (strain DSM 10527 / NCIMB 13988 / SH1).